The following is a 267-amino-acid chain: Thiamine pyrophosphokinase 2 (267 aa).

It belongs to the thiamine pyrophosphokinase family.

The protein localises to the cytoplasm. The protein resides in the cytosol. The catalysed reaction is thiamine + ATP = thiamine diphosphate + AMP + H(+). It functions in the pathway cofactor biosynthesis; thiamine diphosphate biosynthesis; thiamine diphosphate from thiamine: step 1/1. Its function is as follows. Catalyzes the phosphorylation of thiamine to thiamine pyrophosphate (TPP). TPP is an active cofactor for enzymes involved in glycolysis and energy production. Plant leaves require high levels of TPP for photosynthesis and carbohydrate metabolism. The sequence is that of Thiamine pyrophosphokinase 2 (TPK2) from Oryza sativa subsp. japonica (Rice).